The chain runs to 414 residues: Imidazolonepropionase (414 aa).

Positions 95 and 97 each coordinate Fe(3+). Zn(2+) is bound by residues His95 and His97. The 4-imidazolone-5-propanoate site is built by Arg104, Tyr162, and His189. Position 162 (Tyr162) interacts with N-formimidoyl-L-glutamate. Position 252 (His252) interacts with Fe(3+). His252 is a binding site for Zn(2+). Residue Gln255 coordinates 4-imidazolone-5-propanoate. Residue Asp326 coordinates Fe(3+). Residue Asp326 participates in Zn(2+) binding. N-formimidoyl-L-glutamate contacts are provided by Asn328 and Gly330. Ser331 provides a ligand contact to 4-imidazolone-5-propanoate.

It belongs to the metallo-dependent hydrolases superfamily. HutI family. It depends on Zn(2+) as a cofactor. Requires Fe(3+) as cofactor.

It localises to the cytoplasm. The catalysed reaction is 4-imidazolone-5-propanoate + H2O = N-formimidoyl-L-glutamate. Its pathway is amino-acid degradation; L-histidine degradation into L-glutamate; N-formimidoyl-L-glutamate from L-histidine: step 3/3. In terms of biological role, catalyzes the hydrolytic cleavage of the carbon-nitrogen bond in imidazolone-5-propanoate to yield N-formimidoyl-L-glutamate. It is the third step in the universal histidine degradation pathway. This is Imidazolonepropionase from Streptomyces avermitilis (strain ATCC 31267 / DSM 46492 / JCM 5070 / NBRC 14893 / NCIMB 12804 / NRRL 8165 / MA-4680).